A 113-amino-acid chain; its full sequence is Large ribosomal subunit protein uL22 (113 aa).

This sequence belongs to the universal ribosomal protein uL22 family. In terms of assembly, part of the 50S ribosomal subunit.

In terms of biological role, this protein binds specifically to 23S rRNA; its binding is stimulated by other ribosomal proteins, e.g. L4, L17, and L20. It is important during the early stages of 50S assembly. It makes multiple contacts with different domains of the 23S rRNA in the assembled 50S subunit and ribosome. Functionally, the globular domain of the protein is located near the polypeptide exit tunnel on the outside of the subunit, while an extended beta-hairpin is found that lines the wall of the exit tunnel in the center of the 70S ribosome. In Natranaerobius thermophilus (strain ATCC BAA-1301 / DSM 18059 / JW/NM-WN-LF), this protein is Large ribosomal subunit protein uL22.